A 229-amino-acid chain; its full sequence is Acetylcholine-binding protein (229 aa).

The N-terminal stretch at 1–19 (MRRNIFCLACLWIVQACLS) is a signal peptide. N-linked (GlcNAc...) asparagine glycosylation is present at Asn-85. Residues 114-217 (PEVLTPQLAR…PEAYEDVEVS (104 aa)) enclose the Ig-like domain. A disulfide bridge links Cys-142 with Cys-155.

Homopentamer. In terms of processing, N-glycosylated. As to expression, expressed by glial cells.

It is found in the synaptic cleft. In terms of biological role, binds to acetylcholine. Modulates neuronal synaptic transmission. This Lymnaea stagnalis (Great pond snail) protein is Acetylcholine-binding protein.